The chain runs to 674 residues: MAEVPEDYDSGPDEDGELEPERPELPGLHKLYENAEPDTMAKADSKLPAEIYQEPQPETEEEDFKEGEPDSAKNVQLKPGGTSQEGIAKESKRDVPSETEPGIHQEVKSETSREMGEFFKDLEAPMDETHKESDLEPPEEAKPNVTEDVFLESAMETDPDPVPPTETMSEVSGATVRERNLELLEEETEPGVPEESLRVQHEETGLEPPEQTKQDFPSEKLGESLEETDLQPPKMTKPETPEETQRESTEKKRTEPPEQARLEFLEKEPRKSSEEAGLEPPEETQPEVPEEMQRKATEEKGTELPERTKPDFPDHKPRKSTDENVPEPLEEIKLEFPEEESRKTNEETILEQSEMMKPESPEEIRKSNEKKNPQPPEETGPVLPQEINPQVEEKTQTKPTEKILELPDETKPRETHVEFSKEDRPEPIKSKYSVGNDELEHREPKRGKLSLSDKFRKEYYALGSLRESEESIGTHYEFLQPLQKLLNVSEECSYSDPSESQTELSEFVHEKEVVDLSQELKERVSEDDETQPEKGTELQFEHLNWDPEEVAEWISQLGFPQYKECFITNFISGRKLIHVNCSNLPQMGITNFEDMKAISRHTQELLEIEEPLFKRSISLPYRDIIGLYLEQKGHTGIKSDSLTLSEFVKAAGLQDYAPEITAPEENEELPCTEP.

Residues 1–18 (MAEVPEDYDSGPDEDGEL) show a composition bias toward acidic residues. The segment at 1–448 (MAEVPEDYDS…LEHREPKRGK (448 aa)) is disordered. 3 stretches are compositionally biased toward basic and acidic residues: residues 87-142 (IAKE…EEAK), 195-223 (ESLR…KLGE), and 236-274 (TKPE…KSSE). Over residues 276-290 (AGLEPPEETQPEVPE) the composition is skewed to acidic residues. 4 stretches are compositionally biased toward basic and acidic residues: residues 291 to 322 (EMQR…KSTD), 330 to 346 (EEIK…KTNE), 354 to 372 (EMMK…EKKN), and 391 to 429 (VEEK…EPIK). The SAM domain occupies 545 to 608 (WDPEEVAEWI…SRHTQELLEI (64 aa)).

The protein is Sterile alpha motif domain-containing protein 15 (SAMD15) of Homo sapiens (Human).